The sequence spans 294 residues: NAD kinase (294 aa).

The active-site Proton acceptor is the Asp-74. NAD(+)-binding positions include 74 to 75 (DG), 148 to 149 (NE), His-159, Arg-176, Asp-178, 189 to 194 (TAYSLS), and Gln-249.

The protein belongs to the NAD kinase family. Requires a divalent metal cation as cofactor.

The protein resides in the cytoplasm. The catalysed reaction is NAD(+) + ATP = ADP + NADP(+) + H(+). In terms of biological role, involved in the regulation of the intracellular balance of NAD and NADP, and is a key enzyme in the biosynthesis of NADP. Catalyzes specifically the phosphorylation on 2'-hydroxyl of the adenosine moiety of NAD to yield NADP. The protein is NAD kinase of Vibrio vulnificus (strain CMCP6).